Consider the following 149-residue polypeptide: Arginine repressor (149 aa).

The protein belongs to the ArgR family.

Its subcellular location is the cytoplasm. Its pathway is amino-acid biosynthesis; L-arginine biosynthesis [regulation]. In terms of biological role, regulates arginine biosynthesis genes. This Listeria monocytogenes serotype 4b (strain F2365) protein is Arginine repressor.